Reading from the N-terminus, the 130-residue chain is uncharacterized protein (130 aa).

This is an uncharacterized protein from Schizosaccharomyces pombe (strain 972 / ATCC 24843) (Fission yeast).